The following is a 663-amino-acid chain: Chaperone protein HtpG (663 aa).

The a; substrate-binding stretch occupies residues M1–R352. The span at E218–G228 shows a compositional bias: basic and acidic residues. Residues E218–T237 form a disordered region. Residues E353–R595 are b. Positions M596–V663 are c.

It belongs to the heat shock protein 90 family. In terms of assembly, homodimer.

Its subcellular location is the cytoplasm. Molecular chaperone. Has ATPase activity. In Albidiferax ferrireducens (strain ATCC BAA-621 / DSM 15236 / T118) (Rhodoferax ferrireducens), this protein is Chaperone protein HtpG.